A 428-amino-acid chain; its full sequence is GTPase Obg (428 aa).

In terms of domain architecture, Obg spans 1–158; it reads MFIDIAKVFI…LSIVLELKLL (158 aa). Residues 159-331 form the OBG-type G domain; the sequence is ADVGLLGFPN…VIKEAARMLK (173 aa). GTP is bound by residues 165–172, 190–194, 212–215, 282–285, and 312–314; these read GFPNVGKS, FTTLK, DIPG, NKSD, and SAA. Positions 172 and 192 each coordinate Mg(2+). Residues 345 to 428 form the OCT domain; the sequence is MYIPEEKKFT…LNDFEFEYLL (84 aa).

This sequence belongs to the TRAFAC class OBG-HflX-like GTPase superfamily. OBG GTPase family. In terms of assembly, monomer. Mg(2+) serves as cofactor.

The protein localises to the cytoplasm. Its function is as follows. An essential GTPase which binds GTP, GDP and possibly (p)ppGpp with moderate affinity, with high nucleotide exchange rates and a fairly low GTP hydrolysis rate. Plays a role in control of the cell cycle, stress response, ribosome biogenesis and in those bacteria that undergo differentiation, in morphogenesis control. The sequence is that of GTPase Obg from Clostridium botulinum (strain Alaska E43 / Type E3).